Reading from the N-terminus, the 545-residue chain is T-complex protein 1 subunit alpha (545 aa).

This sequence belongs to the TCP-1 chaperonin family. As to quaternary structure, heterooligomeric complex of about 850 to 900 kDa that forms two stacked rings, 12 to 16 nm in diameter.

It localises to the cytoplasm. Functionally, molecular chaperone; assists the folding of proteins upon ATP hydrolysis. Known to play a role, in vitro, in the folding of actin and tubulin. The polypeptide is T-complex protein 1 subunit alpha (TCP-1A) (Schistosoma mansoni (Blood fluke)).